The sequence spans 996 residues: Filament-like plant protein 5 (996 aa).

The interval Met1–Lys20 is disordered. Coiled coils occupy residues Thr59–Ser94, Thr133–Leu248, Val280–Leu301, and Leu359–Ser387. 2 disordered regions span residues Asn409 to Arg482 and Val496 to Thr534. The segment covering Ser417–Ser428 has biased composition (low complexity). Residues Val471 to Arg482 show a composition bias toward polar residues. Over residues Ala503–Ser527 the composition is skewed to low complexity. Coiled-coil stretches lie at residues Gln601–Ile622, Asp737–Glu841, and Asn876–Gln906. The interval Ile962–Arg996 is disordered.

The protein belongs to the FPP family. As to quaternary structure, interacts with WPP/MAF proteins.

The protein is Filament-like plant protein 5 (FPP5) of Arabidopsis thaliana (Mouse-ear cress).